A 486-amino-acid polypeptide reads, in one-letter code: uncharacterized protein (486 aa).

Residue 24-35 (IVHLGFGAFHRA) coordinates NAD(+).

The protein belongs to the mannitol dehydrogenase family. UxuB subfamily.

This is an uncharacterized protein from Escherichia coli (strain K12).